A 96-amino-acid polypeptide reads, in one-letter code: Phosphoribosyl-ATP pyrophosphatase (96 aa).

The protein belongs to the PRA-PH family.

It localises to the cytoplasm. It catalyses the reaction 1-(5-phospho-beta-D-ribosyl)-ATP + H2O = 1-(5-phospho-beta-D-ribosyl)-5'-AMP + diphosphate + H(+). It participates in amino-acid biosynthesis; L-histidine biosynthesis; L-histidine from 5-phospho-alpha-D-ribose 1-diphosphate: step 2/9. The sequence is that of Phosphoribosyl-ATP pyrophosphatase from Methanococcus vannielii (strain ATCC 35089 / DSM 1224 / JCM 13029 / OCM 148 / SB).